Consider the following 273-residue polypeptide: Ribosomal RNA small subunit methyltransferase A (273 aa).

S-adenosyl-L-methionine contacts are provided by Asn-18, Leu-20, Gly-45, Glu-66, Asp-91, and Asn-113.

Belongs to the class I-like SAM-binding methyltransferase superfamily. rRNA adenine N(6)-methyltransferase family. RsmA subfamily.

It is found in the cytoplasm. The enzyme catalyses adenosine(1518)/adenosine(1519) in 16S rRNA + 4 S-adenosyl-L-methionine = N(6)-dimethyladenosine(1518)/N(6)-dimethyladenosine(1519) in 16S rRNA + 4 S-adenosyl-L-homocysteine + 4 H(+). In terms of biological role, specifically dimethylates two adjacent adenosines (A1518 and A1519) in the loop of a conserved hairpin near the 3'-end of 16S rRNA in the 30S particle. May play a critical role in biogenesis of 30S subunits. In Enterobacter sp. (strain 638), this protein is Ribosomal RNA small subunit methyltransferase A.